The chain runs to 432 residues: MEMEKEFEQIDKAGNWAAIYQDIRHEASDFPCRIAKLPKNKNRNRYRDVSPFDHSRIKLHQEDNDYINASLIKMEEAQRSYILTQGPLPNTCGHFWEMVWEQKSRGVVMLNRIMEKGSLKCAQYWPQKEEKEMVFDDTNLKLTLISEDVKSYYTVRQLELENLATQEAREILHFHYTTWPDFGVPESPASFLNFLFKVRESGSLSPEHGPIVVHCSAGIGRSGTFCLADTCLLLMDKRKDPSSVDIKKVLLEMRRFRMGLIQTADQLRFSYLAVIEGAKFIMGDSSVQDQWKELSHEDLEPPPEHVPPPPRPPKRTLEPHNGKCKELFSNHQWVSEESCEDEDILAREESRAPSIAVHSMSSMSQDTEVRKRMVGGGLQSAQASVPTEEELSPTEEEQKAHRPVHWKPFLVNVCMATALATGAYLCYRVCFH.

The residue at position 1 (Met-1) is an N-acetylmethionine. The Tyrosine-protein phosphatase domain maps to 3–277 (MEKEFEQIDK…RFSYLAVIEG (275 aa)). Tyr-20 bears the Phosphotyrosine mark. Residue Ser-50 is modified to Phosphoserine; by PKB/AKT1, CLK1 and CLK2. Tyr-66 carries the post-translational modification Phosphotyrosine; by EGFR. Residues Asp-181 and 215–221 (CSAGIGR) each bind substrate. The Phosphocysteine intermediate role is filled by Cys-215. Cys-215 bears the Cysteine persulfide mark. Cys-215 carries the post-translational modification S-nitrosocysteine; in reversibly inhibited form. Phosphoserine; by CLK1 and CLK2 occurs at positions 242 and 243. Gln-262 contacts substrate. The interval 297–322 (EDLEPPPEHVPPPPRPPKRTLEPHNG) is disordered. Residues Ser-335, Ser-362, and Ser-364 each carry the phosphoserine modification. The segment at 350–402 (SRAPSIAVHSMSSMSQDTEVRKRMVGGGLQSAQASVPTEEELSPTEEEQKAHR) is disordered. Thr-367 bears the Phosphothreonine mark.

This sequence belongs to the protein-tyrosine phosphatase family. Non-receptor class 1 subfamily. In terms of assembly, interacts with EPHA3 (phosphorylated); dephosphorylates EPHA3 and may regulate its trafficking and function. Interacts with MET. Interacts with NCK1. Ser-50 is the major site of phosphorylation as compared to Ser-242 and Ser-243. Activated by phosphorylation at Ser-50. Post-translationally, S-nitrosylation of Cys-215 inactivates the enzyme activity. In terms of processing, sulfhydration at Cys-215 following endoplasmic reticulum stress inactivates the enzyme activity, promoting EIF2AK3/PERK activity. In terms of tissue distribution, found in several tissues including central nervous system, liver and kidney. A high level of expression was found in the hippocampus.

It is found in the endoplasmic reticulum membrane. The catalysed reaction is O-phospho-L-tyrosyl-[protein] + H2O = L-tyrosyl-[protein] + phosphate. In terms of biological role, tyrosine-protein phosphatase which acts as a regulator of endoplasmic reticulum unfolded protein response. Mediates dephosphorylation of EIF2AK3/PERK; inactivating the protein kinase activity of EIF2AK3/PERK. May play an important role in CKII- and p60c-src-induced signal transduction cascades. May regulate the EFNA5-EPHA3 signaling pathway which modulates cell reorganization and cell-cell repulsion. May also regulate the hepatocyte growth factor receptor signaling pathway through dephosphorylation of MET. This chain is Tyrosine-protein phosphatase non-receptor type 1 (Ptpn1), found in Rattus norvegicus (Rat).